The chain runs to 156 residues: Photosystem I reaction center subunit XI (156 aa).

2 consecutive transmembrane segments (helical) span residues 75 to 95 (GGLLSAVAMISILTIALSLYA) and 128 to 148 (FFIGGSGGVIFAYLLCQALYF).

Belongs to the PsaL family.

The protein localises to the cellular thylakoid membrane. This Crocosphaera subtropica (strain ATCC 51142 / BH68) (Cyanothece sp. (strain ATCC 51142)) protein is Photosystem I reaction center subunit XI.